We begin with the raw amino-acid sequence, 335 residues long: MALRWGIVSAGLISSDFTTMLRMLPRSEHQVVAVAARDLSRAKEFAKKHDIPKAYGSYEELAKDPDVEVAYIGTQHPQHKAAVLLCLTAGKAVLCEKPMGVNAAEVREMVAEARSRGLFFMEAIWTRFFPAVEALRSVLAQGTLGDLRVVRAEFGKNLTHVHRATDWAQAGGGLLDLGIYCLQFISMVFGGQKPEKISAVGRRHETGVDDTVTVILQYPGGVHGSFTCSISAQLSNTVSVSGTKGMAQLLDPCWSPTELVVKGEHKEFPLPPAPGKEFNFTNGMGMSYEAKHVRECLQKGLKESPVIPLVESELLADILEEVRKAIGITFPQDKH.

This sequence belongs to the Gfo/Idh/MocA family. As to quaternary structure, homodimer.

The catalysed reaction is (1R,2R)-1,2-dihydrobenzene-1,2-diol + NADP(+) = catechol + NADPH + H(+). It carries out the reaction D-xylose + NADP(+) = D-xylono-1,5-lactone + NADPH + H(+). This chain is Trans-1,2-dihydrobenzene-1,2-diol dehydrogenase (DHDH), found in Bos taurus (Bovine).